The chain runs to 214 residues: uncharacterized protein (214 aa).

Positions 1 to 194 (MVSANREMAV…MHYSEYLSYV (194 aa)) constitute an AMMECR1 domain.

This is an uncharacterized protein from Arabidopsis thaliana (Mouse-ear cress).